The following is a 333-amino-acid chain: Nucleoid-associated protein APJL_0454 (333 aa).

This sequence belongs to the YejK family.

The protein localises to the cytoplasm. The protein resides in the nucleoid. The protein is Nucleoid-associated protein APJL_0454 of Actinobacillus pleuropneumoniae serotype 3 (strain JL03).